Here is a 496-residue protein sequence, read N- to C-terminus: Galactan beta-1,4-galactosyltransferase GALS1 (496 aa).

A helical transmembrane segment spans residues 22–42 (IIATLLALSLVMIVWNLPPYY). A GT92 domain is found at 232–464 (DYLYCGSSLY…AKKKVTLYNK (233 aa)).

The protein belongs to the glycosyltransferase 92 family. As to expression, expressed in root vasculature, mature leaves, trichomes, flowers, siliques and seeds.

The protein resides in the golgi apparatus membrane. Its function is as follows. Involved in the biosynthesis of beta-1,4-galactan. Can transfer galactose residues from UDP-galactose to beta-1,4-galactopentaose in vitro. Forms specifically beta-1,4-galactosyl linkages and can add successive beta-1,4-galactosyl residues to the acceptor. Beta-1,4-galactans are abundant polysaccharides in plant cell walls and are found as side-chain of rhamnogalacturonan I, which is a major component of pectin. The chain is Galactan beta-1,4-galactosyltransferase GALS1 from Arabidopsis thaliana (Mouse-ear cress).